The sequence spans 306 residues: GTPase Era (306 aa).

The Era-type G domain maps to 14 to 181 (KSGFIGIIGR…LDELWKYLPE (168 aa)). Residues 22–29 (GRPNVGKS) are G1. 22–29 (GRPNVGKS) is a GTP binding site. The interval 48–52 (QTTRN) is G2. The interval 69–72 (DTPG) is G3. Residues 69–73 (DTPGI) and 131–134 (NKID) contribute to the GTP site. The segment at 131–134 (NKID) is G4. The interval 160–162 (ISA) is G5. The KH type-2 domain maps to 212-290 (THKEIPYSSA…FLELFVRVRK (79 aa)).

Belongs to the TRAFAC class TrmE-Era-EngA-EngB-Septin-like GTPase superfamily. Era GTPase family. Monomer.

The protein localises to the cytoplasm. It is found in the cell inner membrane. Functionally, an essential GTPase that binds both GDP and GTP, with rapid nucleotide exchange. Plays a role in 16S rRNA processing and 30S ribosomal subunit biogenesis and possibly also in cell cycle regulation and energy metabolism. This is GTPase Era from Syntrophus aciditrophicus (strain SB).